A 306-amino-acid chain; its full sequence is Homoserine kinase (306 aa).

90–100 lines the ATP pocket; that stretch reads PLARGLGSSAS.

This sequence belongs to the GHMP kinase family. Homoserine kinase subfamily.

It is found in the cytoplasm. The enzyme catalyses L-homoserine + ATP = O-phospho-L-homoserine + ADP + H(+). The protein operates within amino-acid biosynthesis; L-threonine biosynthesis; L-threonine from L-aspartate: step 4/5. Catalyzes the ATP-dependent phosphorylation of L-homoserine to L-homoserine phosphate. The sequence is that of Homoserine kinase from Staphylococcus epidermidis (strain ATCC 35984 / DSM 28319 / BCRC 17069 / CCUG 31568 / BM 3577 / RP62A).